We begin with the raw amino-acid sequence, 299 residues long: Taste receptor type 2 member 4 (299 aa).

At 1–9 (MLRLFYFSA) the chain is on the extracellular side. The helical transmembrane segment at 10 to 30 (IIASVILNFVGIIMNLFITVV) threads the bilayer. At 31–46 (NCKTWVKSHRISSSDR) the chain is on the cytoplasmic side. A helical transmembrane segment spans residues 47 to 67 (ILFSLGITRFLMLGLFLVNTI). The Extracellular portion of the chain corresponds to 68 to 81 (YFVSSNXERSVYLS). The chain crosses the membrane as a helical span at residues 82 to 102 (AFFVLCFMFLDSSSLWFVTLL). Residues 103-131 (NILYCVKITNFQHSVFLLLKRNISPKIPR) lie on the Cytoplasmic side of the membrane. The chain crosses the membrane as a helical span at residues 132 to 152 (LLLACVLISAFTTCLYITLSQ). At 153–172 (ASPFPELVTTRNNTSFNINE) the chain is on the extracellular side. N-linked (GlcNAc...) asparagine glycosylation is found at Asn164 and Asn165. A helical transmembrane segment spans residues 173-193 (GILSLVVSLVLSSSLQFIINV). Topologically, residues 194–230 (TSASLLIHSLRRHIQKMQKNATGFWNPQTEAHVGAMK) are cytoplasmic. The chain crosses the membrane as a helical span at residues 231-251 (LMVYFLILYIPYSVATLVQYL). The Extracellular portion of the chain corresponds to 252–262 (PFYAGMDMGTK). The chain crosses the membrane as a helical span at residues 263-283 (SICLIFATLYSPGHSVLIIIT). Residues 284 to 299 (HPKLKTTAKKILCFKK) are Cytoplasmic-facing.

Belongs to the G-protein coupled receptor T2R family.

It is found in the membrane. Its subcellular location is the cell projection. The protein resides in the cilium membrane. Gustducin-coupled receptor implicated in the perception of bitter compounds in the oral cavity and the gastrointestinal tract. Signals through PLCB2 and the calcium-regulated cation channel TRPM5. In airway epithelial cells, binding of denatonium increases the intracellular calcium ion concentration and stimulates ciliary beat frequency. The sequence is that of Taste receptor type 2 member 4 (TAS2R4) from Pan troglodytes (Chimpanzee).